Reading from the N-terminus, the 78-residue chain is Short neurotoxin 342 (78 aa).

A signal peptide spans 1–21; sequence MKTLLLTLVVLTIVCLDLGYT. Intrachain disulfides connect Cys24/Cys43, Cys38/Cys57, Cys59/Cys70, and Cys71/Cys76.

It belongs to the three-finger toxin family. Short-chain subfamily. Type I alpha-neurotoxin sub-subfamily. Expressed by the venom gland.

It is found in the secreted. Functionally, binds to muscle nicotinic acetylcholine receptor (nAChR) and inhibit acetylcholine from binding to the receptor, thereby impairing neuromuscular transmission. The sequence is that of Short neurotoxin 342 from Drysdalia coronoides (White-lipped snake).